A 1920-amino-acid polypeptide reads, in one-letter code: rRNA biogenesis protein RRP5 (1920 aa).

The tract at residues 1–65 (MVVPQKKFAN…GTSLSKKERE (65 aa)) is disordered. S1 motif domains lie at 128 to 210 (GMKL…LSLR), 226 to 291 (GMVF…LSSD), 314 to 384 (GMMV…LTLS), 400 to 473 (GDIF…GTLK), 490 to 557 (GMVT…VTYK), 577 to 646 (GLVT…LSFM), 661 to 733 (GSIV…LSSK), 753 to 822 (NSVV…LSLK), 866 to 930 (GSLI…LSLR), 958 to 1031 (EVHQ…LLLD), 1054 to 1129 (GSVV…LSVK), 1153 to 1224 (GQCV…LVQR), 1260 to 1334 (GDIL…LSLR), 1369 to 1438 (DMGV…VTLK), and 1459 to 1529 (GDMI…LGMK). 2 disordered regions span residues 1535-1555 (NGDDDKAQPLSEDNTSMECDP) and 1605-1652 (TDFD…LEHH). Residues 1620 to 1652 (NKDEKSKRREKQKDKEEREKKIQAAEGRLLEHH) are compositionally biased toward basic and acidic residues. HAT repeat units follow at residues 1651–1683 (HHAPENADEFEKLVRSSPNSSFVWIKYMAFMLS), 1685–1722 (ADIEKARSIAERALRTINIREEEEKLNIWVAYFNLENE), 1726–1758 (PPEESVKKVFERARQYCDPKKVYLALLGVYERT), 1759–1791 (EQYKLADKLLDEMIKKFKQSCKIWLRKIQSSLK), 1828–1860 (GVADRGRSLFEGVLREYPKRTDLWSVYLDQEIR), and 1862–1897 (GEDDVIRSLFERAISLSLPPKKMKFLFKKFLEYEKS).

Highly expressed in flowers and at lower levels in roots, leaves, stems and siliques.

It is found in the nucleus. The protein localises to the nucleolus. Functionally, involved in the biogenesis of ribosomal RNA (rRNA). Required for the formation of 5.8S rRNA. Required for normal development of female gametophytes. The polypeptide is rRNA biogenesis protein RRP5 (Arabidopsis thaliana (Mouse-ear cress)).